A 142-amino-acid chain; its full sequence is MSLPKKKKPEVEEEEKPEEEEEKEEEQEIDINNLEWQNIATSNAFKVDIGDEIIFKPTSEPKQVKSGSAFVVDAYVYQWKSQNQVPQKGNATLYIQTVLGNAIIRAVQQYGLGNFVVHAKNKGRAKGKLYYDYEIKIAKVKQ.

Residues 1–31 (MSLPKKKKPEVEEEEKPEEEEEKEEEQEIDI) are disordered. Acidic residues predominate over residues 11 to 29 (VEEEEKPEEEEEKEEEQEI).

This is an uncharacterized protein from Acidianus sp. F28 (AFV-2).